Consider the following 166-residue polypeptide: Glutamyl-tRNA(Gln) amidotransferase subunit C, mitochondrial (166 aa).

The transit peptide at 1–44 (MIRGWTIFTLCKPSALVGSSHFNKQFNWAKSQLQFATKVPQQPY) directs the protein to the mitochondrion.

Belongs to the GatC family. As to quaternary structure, subunit of the heterotrimeric GatCAB amidotransferase (AdT) complex, composed of A, B and C subunits.

It is found in the mitochondrion. It carries out the reaction L-glutamyl-tRNA(Gln) + L-glutamine + ATP + H2O = L-glutaminyl-tRNA(Gln) + L-glutamate + ADP + phosphate + H(+). Allows the formation of correctly charged Gln-tRNA(Gln) through the transamidation of misacylated Glu-tRNA(Gln) in the mitochondria. The reaction takes place in the presence of glutamine and ATP through an activated gamma-phospho-Glu-tRNA(Gln). This Anopheles darlingi (Mosquito) protein is Glutamyl-tRNA(Gln) amidotransferase subunit C, mitochondrial.